The sequence spans 289 residues: Protein charybde (289 aa).

A disordered region spans residues 119-142; the sequence is TAHHPGHGHGPGPSPMPASPLQST.

It belongs to the DDIT4 family.

It localises to the cytoplasm. In terms of biological role, inhibits cell growth by regulating the Tor pathway upstream of the Tsc1-Tsc2 complex and downstream of Akt1. Acts as a cell death activator during head development. The chain is Protein charybde (chrb) from Drosophila pseudoobscura pseudoobscura (Fruit fly).